A 68-amino-acid chain; its full sequence is UPF0435 protein SAB1812c (68 aa).

The protein belongs to the UPF0435 family.

The protein is UPF0435 protein SAB1812c of Staphylococcus aureus (strain bovine RF122 / ET3-1).